The sequence spans 262 residues: Ribosomal RNA small subunit methyltransferase A (262 aa).

Positions 14, 16, 41, 62, 87, and 109 each coordinate S-adenosyl-L-methionine.

Belongs to the class I-like SAM-binding methyltransferase superfamily. rRNA adenine N(6)-methyltransferase family. RsmA subfamily.

Its subcellular location is the cytoplasm. The enzyme catalyses adenosine(1518)/adenosine(1519) in 16S rRNA + 4 S-adenosyl-L-methionine = N(6)-dimethyladenosine(1518)/N(6)-dimethyladenosine(1519) in 16S rRNA + 4 S-adenosyl-L-homocysteine + 4 H(+). Specifically dimethylates two adjacent adenosines (A1518 and A1519) in the loop of a conserved hairpin near the 3'-end of 16S rRNA in the 30S particle. May play a critical role in biogenesis of 30S subunits. This Francisella tularensis subsp. novicida (strain U112) protein is Ribosomal RNA small subunit methyltransferase A.